We begin with the raw amino-acid sequence, 294 residues long: Formamidopyrimidine-DNA glycosylase (294 aa).

Residue Pro2 is the Schiff-base intermediate with DNA of the active site. The active-site Proton donor is Glu3. The Proton donor; for beta-elimination activity role is filled by Lys61. Residues His104, Arg123, and Lys169 each coordinate DNA. An FPG-type zinc finger spans residues 255–289 (AVYGRQDEPCRRCGAPIVREKFMNRSSYSCPRCQP). The active-site Proton donor; for delta-elimination activity is the Arg279.

It belongs to the FPG family. In terms of assembly, monomer. Requires Zn(2+) as cofactor.

It catalyses the reaction Hydrolysis of DNA containing ring-opened 7-methylguanine residues, releasing 2,6-diamino-4-hydroxy-5-(N-methyl)formamidopyrimidine.. It carries out the reaction 2'-deoxyribonucleotide-(2'-deoxyribose 5'-phosphate)-2'-deoxyribonucleotide-DNA = a 3'-end 2'-deoxyribonucleotide-(2,3-dehydro-2,3-deoxyribose 5'-phosphate)-DNA + a 5'-end 5'-phospho-2'-deoxyribonucleoside-DNA + H(+). Its function is as follows. Involved in base excision repair of DNA damaged by oxidation or by mutagenic agents. Acts as a DNA glycosylase that recognizes and removes damaged bases. Has a preference for oxidized purines, such as 7,8-dihydro-8-oxoguanine (8-oxoG). Has AP (apurinic/apyrimidinic) lyase activity and introduces nicks in the DNA strand. Cleaves the DNA backbone by beta-delta elimination to generate a single-strand break at the site of the removed base with both 3'- and 5'-phosphates. The sequence is that of Formamidopyrimidine-DNA glycosylase from Nocardia farcinica (strain IFM 10152).